A 297-amino-acid polypeptide reads, in one-letter code: Farnesyl diphosphate synthase (297 aa).

The isopentenyl diphosphate site is built by Lys-47, Arg-50, and His-79. Asp-86 and Asp-92 together coordinate Mg(2+). Arg-97 is a binding site for (2E)-geranyl diphosphate. Residue Arg-98 coordinates isopentenyl diphosphate. Positions 183, 184, 221, and 238 each coordinate (2E)-geranyl diphosphate.

Belongs to the FPP/GGPP synthase family. Mg(2+) is required as a cofactor.

Its subcellular location is the cytoplasm. It carries out the reaction isopentenyl diphosphate + (2E)-geranyl diphosphate = (2E,6E)-farnesyl diphosphate + diphosphate. This chain is Farnesyl diphosphate synthase, found in Geobacillus stearothermophilus (Bacillus stearothermophilus).